We begin with the raw amino-acid sequence, 150 residues long: Ribosome maturation factor RimP (150 aa).

This sequence belongs to the RimP family.

Its subcellular location is the cytoplasm. Required for maturation of 30S ribosomal subunits. The polypeptide is Ribosome maturation factor RimP (Francisella philomiragia subsp. philomiragia (strain ATCC 25017 / CCUG 19701 / FSC 153 / O#319-036)).